The chain runs to 421 residues: Enolase (421 aa).

Q165 contributes to the (2R)-2-phosphoglycerate binding site. Catalysis depends on E207, which acts as the Proton donor. Mg(2+) contacts are provided by D244, E285, and D312. K337, R366, S367, and K388 together coordinate (2R)-2-phosphoglycerate. K337 serves as the catalytic Proton acceptor.

This sequence belongs to the enolase family. Mg(2+) is required as a cofactor.

The protein localises to the cytoplasm. It localises to the secreted. Its subcellular location is the cell surface. It catalyses the reaction (2R)-2-phosphoglycerate = phosphoenolpyruvate + H2O. The protein operates within carbohydrate degradation; glycolysis; pyruvate from D-glyceraldehyde 3-phosphate: step 4/5. In terms of biological role, catalyzes the reversible conversion of 2-phosphoglycerate (2-PG) into phosphoenolpyruvate (PEP). It is essential for the degradation of carbohydrates via glycolysis. The polypeptide is Enolase (Ehrlichia canis (strain Jake)).